The sequence spans 468 residues: Glutamate--tRNA ligase 2 (468 aa).

The 'HIGH' region signature appears at P9–G19. The 'KMSKS' region motif lies at K238 to R242. Residue K241 participates in ATP binding.

This sequence belongs to the class-I aminoacyl-tRNA synthetase family. Glutamate--tRNA ligase type 1 subfamily. In terms of assembly, monomer.

The protein resides in the cytoplasm. It carries out the reaction tRNA(Glu) + L-glutamate + ATP = L-glutamyl-tRNA(Glu) + AMP + diphosphate. In terms of biological role, catalyzes the attachment of glutamate to tRNA(Glu) in a two-step reaction: glutamate is first activated by ATP to form Glu-AMP and then transferred to the acceptor end of tRNA(Glu). This is Glutamate--tRNA ligase 2 from Rhodospirillum rubrum (strain ATCC 11170 / ATH 1.1.1 / DSM 467 / LMG 4362 / NCIMB 8255 / S1).